The primary structure comprises 541 residues: Halolysin-like extracellular serine protease Nep (541 aa).

The segment at residues 1–33 (MTRDTNSNVGRRSVLKAASALGAFLGLGGVASA) is a signal peptide (tat-type signal). A propeptide spanning residues 34–121 (TPGREPGPKK…DNATYETLEV (88 aa)) is cleaved from the precursor. The Peptidase S8 domain maps to 130–405 (QYAPQQVNCE…YGRVDAELAV (276 aa)). Catalysis depends on charge relay system residues D157, H198, and S351. Positions 403 to 453 (LAVTTDPDNGDDDDDDDDDEDDPGDGECGDETNTATADGELSGGWGGNPSD) are disordered. Positions 410–432 (DNGDDDDDDDDDEDDPGDGECGD) are enriched in acidic residues.

Belongs to the peptidase S8 family. Monomer. In terms of processing, exported by the Tat system. The position of the signal peptide cleavage has not been experimentally proven. After transport across the membrane, the propeptide is probably processed autocatalytically, yielding the mature fully active protease.

The protein localises to the secreted. With respect to regulation, dependent on high salt concentrations for activity and stability. Strongly inhibited by the serine protease inhibitors diisopropyl fluorophosphate (DFP), phenylmethyl sulfonylfluoride (PMSF) and chymostatin. Also inhibited by denaturing agents such as SDS, urea, and HCl guanidinium. Activated by thiol-containing reducing agents such as dithiotreitol (DTT) and 2-mercaptoethanol. Serine protease that hydrolyzes large proteins such as casein and gelatin. Cleaves preferentially at the carboxyl terminus of Phe, Tyr or Leu. Is also able to catalyze peptide synthesis under different salt concentrations in the presence of dimethyl sulfoxide (DMSO). The sequence is that of Halolysin-like extracellular serine protease Nep from Natrialba magadii.